The chain runs to 85 residues: Large ribosomal subunit protein bL27 (85 aa).

Positions 1-22 are disordered; sequence MAHKKAGGSTRNGRDSESKRLG.

It belongs to the bacterial ribosomal protein bL27 family.

This Aliivibrio fischeri (strain ATCC 700601 / ES114) (Vibrio fischeri) protein is Large ribosomal subunit protein bL27.